The chain runs to 339 residues: Glucokinase (339 aa).

Position 16–21 (16–21) interacts with ATP; the sequence is GDIGGT.

It belongs to the bacterial glucokinase family.

It localises to the cytoplasm. The enzyme catalyses D-glucose + ATP = D-glucose 6-phosphate + ADP + H(+). This chain is Glucokinase, found in Sinorhizobium fredii (strain NBRC 101917 / NGR234).